The sequence spans 69 residues: Parvalbumin beta 3 (69 aa).

Ala1 carries the N-acetylalanine modification. Positions 24 to 59 (FNYKTFFKFFAIIDQDHSGFIEEEELKLFLQTFSAG) constitute an EF-hand domain. Ca(2+)-binding residues include Asp37, Asp39, Ser41, Phe43, Glu45, and Glu48.

It belongs to the parvalbumin family.

Its function is as follows. In muscle, parvalbumin is thought to be involved in relaxation after contraction. It binds two calcium ions. The polypeptide is Parvalbumin beta 3 (Merluccius polli (Benguela hake)).